We begin with the raw amino-acid sequence, 144 residues long: Neuritin-A (144 aa).

The signal sequence occupies residues 1-27; sequence MGLKLSGRYIFLVLAVHLAYLLQAVKA. Ser-114 is lipidated: GPI-anchor amidated serine. The propeptide at 115 to 144 is removed in mature form; sequence AGAPGQRLLFPAFLPLLMVFLSTLFILVLQ.

This sequence belongs to the neuritin family. As to expression, expressed in sensory regions of the brain including the visual, auditory and olfactory systems. Within the retina, only expressed in the retinal ganglion cells. Concentrated in axon tracts including retinal axons.

The protein resides in the cell membrane. In terms of biological role, modulates postsynaptic dendritic arbor elaboration and synaptic maturation. This Xenopus laevis (African clawed frog) protein is Neuritin-A (nrn1-a).